Reading from the N-terminus, the 698-residue chain is Polyribonucleotide nucleotidyltransferase (698 aa).

Mg(2+) is bound by residues Asp-486 and Asp-492. Residues 553–612 (PRIIVRNIPKDRIGELIGPGGKNVRGISELTGAELYIEDDGKVTISGSNQESAEKAAKMV) form the KH domain. Positions 622–690 (GKIYEGKVKR…KTGKIDLSRK (69 aa)) constitute an S1 motif domain.

This sequence belongs to the polyribonucleotide nucleotidyltransferase family. Mg(2+) is required as a cofactor.

It is found in the cytoplasm. It carries out the reaction RNA(n+1) + phosphate = RNA(n) + a ribonucleoside 5'-diphosphate. Its function is as follows. Involved in mRNA degradation. Catalyzes the phosphorolysis of single-stranded polyribonucleotides processively in the 3'- to 5'-direction. The sequence is that of Polyribonucleotide nucleotidyltransferase from Leptospira interrogans serogroup Icterohaemorrhagiae serovar copenhageni (strain Fiocruz L1-130).